The chain runs to 501 residues: MALYLSSSRLITFLSFILLLSNGFSSSSSRPSIHHRHHLDNHNYKDALSKSILFFEGQRSGKLPPNQRMTWRSNSGLSDGSALNVDLVGGYYDAGDNMKFGFPMAFTTTMLSWSLIEFGGLMKSELPNAKDAIRWATDFLLKATSHPDTIYVQVGDPNMDHACWERPEDMDTPRSVFKVDKNNPGSDIAGEIAAALAAASIVFRKCDPSYSNHLLQRAITVFTFADKYRGPYSAGLAPEVCPFYCSYSGYQDELLWGAAWLQKATNNPTYLNYIKANGQILGADEFDNMFSWDNKHVGARILLSKEFLIQKVKSLEEYKEHADSFICSVLPGASSSQYTPGGLLFKMGESNMQYVTSTSFLLLTYAKYLTSARTVAYCGGSVVTPARLRSIAKKQVDYLLGGNPLKMSYMVGYGLKYPRRIHHRGSSLPSVAVHPTRIQCHDGFSLFTSQSPNPNDLVGAVVGGPDQNDQFPDERSDYGRSEPATYINAPLVGALAYLARS.

An N-terminal signal peptide occupies residues 1–29 (MALYLSSSRLITFLSFILLLSNGFSSSSS). Asp96 serves as the catalytic Nucleophile. Active-site residues include His422, Asp473, and Glu482.

This sequence belongs to the glycosyl hydrolase 9 (cellulase E) family.

It is found in the secreted. The enzyme catalyses Endohydrolysis of (1-&gt;4)-beta-D-glucosidic linkages in cellulose, lichenin and cereal beta-D-glucans.. The chain is Endoglucanase 1 (CEL2) from Arabidopsis thaliana (Mouse-ear cress).